The primary structure comprises 100 residues: Small ribosomal subunit protein uS14 (100 aa).

This sequence belongs to the universal ribosomal protein uS14 family. As to quaternary structure, part of the 30S ribosomal subunit. Contacts proteins S3 and S10.

Its function is as follows. Binds 16S rRNA, required for the assembly of 30S particles and may also be responsible for determining the conformation of the 16S rRNA at the A site. This chain is Small ribosomal subunit protein uS14, found in Thermosynechococcus vestitus (strain NIES-2133 / IAM M-273 / BP-1).